A 452-amino-acid polypeptide reads, in one-letter code: Pup--protein ligase (452 aa).

Glutamate 9 is a Mg(2+) binding site. An ATP-binding site is contributed by arginine 53. Residue tyrosine 55 coordinates Mg(2+). Aspartate 57 acts as the Proton acceptor in catalysis. Glutamate 63 provides a ligand contact to Mg(2+). 2 residues coordinate ATP: threonine 66 and tryptophan 419.

Belongs to the Pup ligase/Pup deamidase family. Pup-conjugating enzyme subfamily.

The enzyme catalyses ATP + [prokaryotic ubiquitin-like protein]-L-glutamate + [protein]-L-lysine = ADP + phosphate + N(6)-([prokaryotic ubiquitin-like protein]-gamma-L-glutamyl)-[protein]-L-lysine.. It participates in protein degradation; proteasomal Pup-dependent pathway. It functions in the pathway protein modification; protein pupylation. Its function is as follows. Catalyzes the covalent attachment of the prokaryotic ubiquitin-like protein modifier Pup to the proteasomal substrate proteins, thereby targeting them for proteasomal degradation. This tagging system is termed pupylation. The ligation reaction involves the side-chain carboxylate of the C-terminal glutamate of Pup and the side-chain amino group of a substrate lysine. This is Pup--protein ligase from Acidothermus cellulolyticus (strain ATCC 43068 / DSM 8971 / 11B).